The sequence spans 1806 residues: Non-reducing polyketide synthase pks12 (1806 aa).

Positions 30–191 (TDTMSGMISL…TKLHLRGKVH (162 aa)) constitute a Starter acyltransferase (SAT) domain. The 426-residue stretch at 330–755 (ENAIAIVGAG…GSNSALICGE (426 aa)) folds into the Ketosynthase family 3 (KS3) domain. Catalysis depends on for beta-ketoacyl synthase activity residues cysteine 504, histidine 639, and histidine 678. A malonyl-CoA:ACP transacylase (MAT) domain region spans residues 860-1156 (LAFSGQSKQT…HNPSQHTFLG (297 aa)). Positions 862–1147 (FSGQSKQTIG…IIPMVKRATH (286 aa)) constitute a Malonyl-CoA:ACP transacylase (MAT) domain. Residue serine 947 is the For acyl/malonyl transferase activity of the active site. Positions 1249–1383 (PQTPPLKLVT…GRFSVTSHID (135 aa)) are N-terminal hotdog fold. One can recognise a PKS/mFAS DH domain in the interval 1249–1558 (PQTPPLKLVT…FSRFPIAKLE (310 aa)). A product template (PT) domain region spans residues 1249 to 1558 (PQTPPLKLVT…FSRFPIAKLE (310 aa)). Histidine 1288 serves as the catalytic Proton acceptor; for dehydratase activity. The tract at residues 1404–1558 (SERLMAGRAY…FSRFPIAKLE (155 aa)) is C-terminal hotdog fold. The active-site Proton donor; for dehydratase activity is the aspartate 1468. In terms of domain architecture, Carrier spans 1727–1804 (QSKLRIRQRI…ELVDYVVISS (78 aa)). Serine 1764 bears the O-(pantetheine 4'-phosphoryl)serine mark.

Pantetheine 4'-phosphate serves as cofactor.

It participates in secondary metabolite biosynthesis. Non-reducing polyketide synthase; part of the gene cluster that mediates the biosynthesis of mitorubrinol and mitorubrinic acid, two virulence factors that improve T.marneffei intracellular survival in macrophages. The two polyketide synthases pks12 and pks11 are probably responsible for sequential use in the biosynthesis of mitorubrinol and mitorubrinic acid. The first part of the biosynthesis is probably catalyzed by pks12, which synthesized orsellinic acid. This tetraketide is then used as a starter unit for pks11, which possesses a SAT domain, in the second part of the biosynthesis. Pks11, contains a methyltransferase domain, also served that methylates the products, using a methyl group from S-adenosylmethionine. The polypeptide is Non-reducing polyketide synthase pks12 (Talaromyces marneffei (Penicillium marneffei)).